Here is a 532-residue protein sequence, read N- to C-terminus: Membrane protein insertase YidC (532 aa).

The next 6 helical transmembrane spans lie at 6 to 26 (IVLA…FAEY), 317 to 337 (AIDF…LTFF), 342 to 362 (GNWG…FWPL), 411 to 431 (GGCL…QALL), 451 to 473 (VWLA…GASM), and 496 to 516 (PIIF…YWLF).

Belongs to the OXA1/ALB3/YidC family. Type 1 subfamily. In terms of assembly, interacts with the Sec translocase complex via SecD. Specifically interacts with transmembrane segments of nascent integral membrane proteins during membrane integration.

The protein resides in the cell membrane. In terms of biological role, required for the insertion and/or proper folding and/or complex formation of integral membrane proteins into the membrane. Involved in integration of membrane proteins that insert both dependently and independently of the Sec translocase complex, as well as at least some lipoproteins. Aids folding of multispanning membrane proteins. In Lawsonia intracellularis (strain PHE/MN1-00), this protein is Membrane protein insertase YidC.